A 232-amino-acid chain; its full sequence is MYFPLEEPDAYGDFVRRLNRFAGIAVIGGREVKIHIHDPGRLQELLFPGVKIWARRRVGGKTEYYLTAVELEEELVLVDSSLHNKVAAWLVESGVIFQGYRVAKKEPAFGKGRFDLLLESPTGGRALVEVKGVTLEAGRRALFPDAPTARGARHMEELARATAEGYEAYVLFLVFRKRAASFSPNWDMDRKFAESLLRAHNAGVGVRAVKLEMFKWGLRYVGELPVDLTPPF.

It belongs to the SfsA family.

The sequence is that of Sugar fermentation stimulation protein homolog from Pyrobaculum arsenaticum (strain DSM 13514 / JCM 11321 / PZ6).